The primary structure comprises 379 residues: Succinyl-diaminopimelate desuccinylase (379 aa).

H70 serves as a coordination point for Zn(2+). D72 is a catalytic residue. Residue D103 coordinates Zn(2+). The Proton acceptor role is filled by E137. Residues E138, E166, and H352 each coordinate Zn(2+).

Belongs to the peptidase M20A family. DapE subfamily. As to quaternary structure, homodimer. The cofactor is Zn(2+). Co(2+) is required as a cofactor.

The catalysed reaction is N-succinyl-(2S,6S)-2,6-diaminopimelate + H2O = (2S,6S)-2,6-diaminopimelate + succinate. The protein operates within amino-acid biosynthesis; L-lysine biosynthesis via DAP pathway; LL-2,6-diaminopimelate from (S)-tetrahydrodipicolinate (succinylase route): step 3/3. Catalyzes the hydrolysis of N-succinyl-L,L-diaminopimelic acid (SDAP), forming succinate and LL-2,6-diaminopimelate (DAP), an intermediate involved in the bacterial biosynthesis of lysine and meso-diaminopimelic acid, an essential component of bacterial cell walls. This chain is Succinyl-diaminopimelate desuccinylase, found in Burkholderia cenocepacia (strain ATCC BAA-245 / DSM 16553 / LMG 16656 / NCTC 13227 / J2315 / CF5610) (Burkholderia cepacia (strain J2315)).